A 174-amino-acid chain; its full sequence is Small ribosomal subunit protein uS5 (174 aa).

The 64-residue stretch at 18 to 81 (WQERVIQIRR…ADGKKHLIDI (64 aa)) folds into the S5 DRBM domain.

This sequence belongs to the universal ribosomal protein uS5 family. Part of the 30S ribosomal subunit. Contacts proteins S4 and S8.

In terms of biological role, with S4 and S12 plays an important role in translational accuracy. Its function is as follows. Located at the back of the 30S subunit body where it stabilizes the conformation of the head with respect to the body. The protein is Small ribosomal subunit protein uS5 of Trichormus variabilis (strain ATCC 29413 / PCC 7937) (Anabaena variabilis).